The chain runs to 123 residues: Ribosome-binding factor A (123 aa).

Belongs to the RbfA family. As to quaternary structure, monomer. Binds 30S ribosomal subunits, but not 50S ribosomal subunits or 70S ribosomes.

The protein resides in the cytoplasm. In terms of biological role, one of several proteins that assist in the late maturation steps of the functional core of the 30S ribosomal subunit. Associates with free 30S ribosomal subunits (but not with 30S subunits that are part of 70S ribosomes or polysomes). Required for efficient processing of 16S rRNA. May interact with the 5'-terminal helix region of 16S rRNA. The sequence is that of Ribosome-binding factor A from Trichlorobacter lovleyi (strain ATCC BAA-1151 / DSM 17278 / SZ) (Geobacter lovleyi).